Consider the following 326-residue polypeptide: Ribose operon repressor (326 aa).

An HTH lacI-type domain is found at 1–56 (MATIKDVAGAAGVSVATVSRNLNDNGYVHEETRTRVIAAMAKLNYYPNEVARSLYK). The H-T-H motif DNA-binding region spans 4-23 (IKDVAGAAGVSVATVSRNLN).

Transcriptional repressor for the ribose rbsDACBK operon. This is Ribose operon repressor (rbsR) from Bacillus subtilis (strain 168).